Here is a 1191-residue protein sequence, read N- to C-terminus: Phosphatidylinositol 3,4,5-trisphosphate 5-phosphatase 1 (1191 aa).

The SH2 domain occupies 8-104 (WNHGNITRSK…GLVTHLQYPV (97 aa)). Residues 122 to 148 (SVMSPPELPPRNIPMSAGPSEAKDLPL) are disordered. The SH3-binding 1 signature appears at 127-132 (PELPPR). Residue S246 is modified to Phosphoserine. The short motif at 915-918 (NPNY) is the NPXY motif 1 element. Y918 is subject to Phosphotyrosine. S935 bears the Phosphoserine mark. Y945 carries the post-translational modification Phosphotyrosine. Disordered regions lie at residues 947 to 994 (QLPK…EARP) and 1021 to 1191 (YGSV…TAMQ). Positions 962-972 (PPTPPSQPPLS) are enriched in pro residues. T964 carries the post-translational modification Phosphothreonine. Residues S967 and S972 each carry the phosphoserine modification. The SH3-binding 2 signature appears at 970-975 (PLSPKK). Residues 1015 to 1029 (MFENPLYGSVSSFPK) form an interaction with DAB2 region. Residues 1018–1021 (NPLY) carry the NPXY motif 2 motif. The residue at position 1021 (Y1021) is a Phosphotyrosine. Basic and acidic residues predominate over residues 1032–1046 (PRKEQESPKMLRKEP). Positions 1039–1050 (PKMLRKEPPPCP) match the SH3-binding 3 motif. Residues 1141–1150 (IPAPRPPLPV) are compositionally biased toward pro residues. Positions 1162–1184 (KGRDYRDNTELPHHGKHRQEEGL) are enriched in basic and acidic residues.

The protein belongs to the inositol 1,4,5-trisphosphate 5-phosphatase family. In terms of assembly, interacts with tyrosine phosphorylated form of SHC1. Interacts with tyrosine phosphorylated form of DOK1. Interacts with tyrosine phosphorylated form of DOK3. Interacts with tyrosine phosphorylated form of SLAMF1/CD150. Interacts with PTPN11/SHP-2 in response to IL-3. Interacts with receptor EPOR. Interacts with receptors MS4A2/FCER1B and FCER1G. Interacts with receptors FCGR2B and FCGR3. Interacts with receptor FCGR2A, leading to regulate gene expression during the phagocytic process. Interacts with GRB2. Interacts with PLCG1. Interacts with tyrosine kinases SRC and TEC. Interacts with CRKL. Interacts with c-Met/MET. Interacts with MILR1 (tyrosine-phosphorylated). Isoform 5 interacts with IL6ST/gp130. Can weakly interact (via NPXY motif 2) with DAB2 (via PID domain); the interaction is impaired by tyrosine phosphorylation of the NPXY motif. Interacts (via SH2 domain) with tyrosine phosphorylated KLRC1 (via ITIM). Interacts with MPL/TPOR. Post-translationally, tyrosine phosphorylated by the members of the SRC family after exposure to a diverse array of extracellular stimuli such as cytokines, growth factors, antibodies, chemokines, integrin ligands and hypertonic and oxidative stress. Phosphorylated upon IgG receptor FCGR2B-binding. Specifically expressed in immune and hematopoietic cells. Levels vary considerably within this compartment. Lost during erythropoiesis when erythroid cells become Ter119+. Increases substantially with T-cell maturation and when resting B-cells are activated. Also present in mature granulocytes, monocyte/macrophages, mast cells and platelets. Isoform 5 is the only form expressed in embryonic stem (ES) cells and is coexpressed with other isoforms in hematopoietic stem cells, and disappears with differentiation.

It is found in the cytoplasm. It localises to the cell membrane. The protein resides in the membrane raft. The protein localises to the cytoskeleton. The catalysed reaction is a 1,2-diacyl-sn-glycero-3-phospho-(1D-myo-inositol-3,4,5-trisphosphate) + H2O = a 1,2-diacyl-sn-glycero-3-phospho-(1D-myo-inositol-3,4-bisphosphate) + phosphate. It carries out the reaction a 1,2-diacyl-sn-glycero-3-phospho-(1D-myo-inositol-4,5-bisphosphate) + H2O = a 1,2-diacyl-sn-glycero-3-phospho-(1D-myo-inositol 4-phosphate) + phosphate. It catalyses the reaction 1D-myo-inositol 1,3,4,5-tetrakisphosphate + H2O = 1D-myo-inositol 1,3,4-trisphosphate + phosphate. Activated upon translocation to the sites of synthesis of PtdIns(3,4,5)P3 in the membrane. Phosphatidylinositol (PtdIns) phosphatase that specifically hydrolyzes the 5-phosphate of phosphatidylinositol-3,4,5-trisphosphate (PtdIns(3,4,5)P3) to produce PtdIns(3,4)P2, thereby negatively regulating the PI3K (phosphoinositide 3-kinase) pathways. Also able to hydrolyze the 5-phosphate of phosphatidylinositol-4,5-bisphosphate (PtdIns(4,5)P3) and inositol 1,3,4,5-tetrakisphosphate. Acts as a negative regulator of B-cell antigen receptor signaling. Mediates signaling from the FC-gamma-RIIB receptor (FCGR2B), playing a central role in terminating signal transduction from activating immune/hematopoietic cell receptor systems. Acts as a negative regulator of myeloid cell proliferation/survival and chemotaxis, mast cell degranulation, immune cells homeostasis, integrin alpha-IIb/beta-3 signaling in platelets and JNK signaling in B-cells. Regulates proliferation of osteoclast precursors, macrophage programming, phagocytosis and activation and is required for endotoxin tolerance. Involved in the control of cell-cell junctions, CD32a signaling in neutrophils and modulation of EGF-induced phospholipase C activity. Key regulator of neutrophil migration, by governing the formation of the leading edge and polarization required for chemotaxis. Modulates FCGR3/CD16-mediated cytotoxicity in NK cells. Mediates the activin/TGF-beta-induced apoptosis through its Smad-dependent expression. The chain is Phosphatidylinositol 3,4,5-trisphosphate 5-phosphatase 1 (Inpp5d) from Mus musculus (Mouse).